Here is a 1002-residue protein sequence, read N- to C-terminus: Protein SMAX1-LIKE 7 (1002 aa).

In terms of domain architecture, Clp R spans 8–185 (ARQCLTEETA…DVLHPPVTSQ (178 aa)). 2 repeat regions span residues 12–86 (LTEE…LDRL) and 103–185 (VSNS…VTSQ). The EAR motif lies at 854–858 (LDLNL).

This sequence belongs to the ClpA/ClpB family. As to quaternary structure, interacts with TPL/TPR in an EAR-motif dependent manner. Interacts with TPL, TPR1, TPR2 and TPR4. Interacts with MAX2 and TPR2. Interacts with D14. The interaction with D14 occurs in the presence of (2'R) stereoisomers of strigolactones, but not (2'S) stereoisomers. Ubiquitinated upon strigolactone treatment. Strigolactone, but not karrikin, triggers rapid SCF(MAX2)-dependent degradation. As to expression, expressed in axillary branches and roots. Detected in seedlings and leaves. Expressed in the primary rosette buds and expanding leaves of adult rosettes, the vasculature of the hypocotyls, cotyledons, and mature roots, and in the midvein and petioles of young leaves.

It localises to the nucleus. In terms of biological role, probable component of a transcriptional corepressor complex involved in branching control. Regulates cotyledon expansion and lateral root growth, but not germination or hypocotyl elongation. Promotes auxin transport and PIN1 accumulation in the stem and represses BRC1/TCP18 expression in axillary buds. The chain is Protein SMAX1-LIKE 7 from Arabidopsis thaliana (Mouse-ear cress).